The primary structure comprises 330 residues: Solute carrier family 25 member 16 (330 aa).

Solcar repeat units lie at residues 32–118 (FYWL…YKTL), 126–214 (SGHV…LKSV), and 236–326 (LKTH…MKQF). Transmembrane regions (helical) follow at residues 33-52 (YWLR…KTTV), 95-112 (GAMM…FMAF), 132-149 (LMAG…TYPL), 189-209 (GLMP…FTFG), 242-262 (LLCG…FDVT), and 297-317 (GLYR…AVAF).

It belongs to the mitochondrial carrier (TC 2.A.29) family. In terms of tissue distribution, mostly in thyroid, liver, lung, kidney and to a lesser extent in heart and skeletal muscle.

It is found in the mitochondrion inner membrane. Functionally, may be involved in the transport of coenzyme A in the mitochondrial matrix. Very little is known about the physiological function of this carrier. The chain is Solute carrier family 25 member 16 (SLC25A16) from Bos taurus (Bovine).